The chain runs to 39 residues: Photosystem II reaction center protein X (39 aa).

The helical transmembrane segment at 10–30 (WSLLWGTAIVVIPVTVGLIFI) threads the bilayer.

Belongs to the PsbX family. Type 1 subfamily. In terms of assembly, PSII is composed of 1 copy each of membrane proteins PsbA, PsbB, PsbC, PsbD, PsbE, PsbF, PsbH, PsbI, PsbJ, PsbK, PsbL, PsbM, PsbT, PsbX, PsbY, PsbZ, Psb30/Ycf12, peripheral proteins PsbO, CyanoQ (PsbQ), PsbU, PsbV and a large number of cofactors. It forms dimeric complexes.

It localises to the cellular thylakoid membrane. Functionally, involved in the binding and/or turnover of quinones at the Q(B) site of photosystem II (PSII). PSII is a light-driven water plastoquinone oxidoreductase, using light energy to abstract electrons from H(2)O, generating a proton gradient subsequently used for ATP formation. The protein is Photosystem II reaction center protein X of Nostoc punctiforme (strain ATCC 29133 / PCC 73102).